The following is a 258-amino-acid chain: UPF0246 protein YaaA (258 aa).

Belongs to the UPF0246 family.

The sequence is that of UPF0246 protein YaaA from Escherichia coli O8 (strain IAI1).